The following is a 358-amino-acid chain: Membrane-bound lytic murein transglycosylase C (358 aa).

The signal sequence occupies residues 1 to 16 (MKKILALLVIAPLLVS). C17 carries the N-palmitoyl cysteine lipid modification. A lipid anchor (S-diacylglycerol cysteine) is attached at C17.

Belongs to the transglycosylase Slt family.

Its subcellular location is the cell outer membrane. It carries out the reaction Exolytic cleavage of the (1-&gt;4)-beta-glycosidic linkage between N-acetylmuramic acid (MurNAc) and N-acetylglucosamine (GlcNAc) residues in peptidoglycan, from either the reducing or the non-reducing ends of the peptidoglycan chains, with concomitant formation of a 1,6-anhydrobond in the MurNAc residue.. In terms of biological role, murein-degrading enzyme. May play a role in recycling of muropeptides during cell elongation and/or cell division. This chain is Membrane-bound lytic murein transglycosylase C, found in Yersinia pseudotuberculosis serotype O:1b (strain IP 31758).